A 567-amino-acid chain; its full sequence is Urease subunit alpha (567 aa).

The Urease domain maps to 129 to 567; sequence GGIDTHIHWI…LPMAQRYFLF (439 aa). Ni(2+) contacts are provided by histidine 134, histidine 136, and lysine 217. Lysine 217 is subject to N6-carboxylysine. Histidine 219 contributes to the substrate binding site. Ni(2+) contacts are provided by histidine 246 and histidine 272. Histidine 320 (proton donor) is an active-site residue. Aspartate 360 lines the Ni(2+) pocket.

Belongs to the metallo-dependent hydrolases superfamily. Urease alpha subunit family. In terms of assembly, heterotrimer of UreA (gamma), UreB (beta) and UreC (alpha) subunits. Three heterotrimers associate to form the active enzyme. The apoenzyme interacts with an accessory complex composed of UreD, UreF and UreG, which is required for the assembly of the nickel containing metallocenter of UreC. The UreE protein may also play a direct role as a metallochaperone in nickel transfer to the urease apoprotein. Requires Ni cation as cofactor. Post-translationally, carboxylation allows a single lysine to coordinate two nickel ions.

The protein localises to the cytoplasm. It carries out the reaction urea + 2 H2O + H(+) = hydrogencarbonate + 2 NH4(+). It participates in nitrogen metabolism; urea degradation; CO(2) and NH(3) from urea (urease route): step 1/1. Its activity is regulated as follows. The apoenzyme can be activated in vitro in the presence of nickel ions and carbon dioxide, which promotes carboxylation of Lys-217. This Klebsiella aerogenes (Enterobacter aerogenes) protein is Urease subunit alpha.